The primary structure comprises 111 residues: METVAHHRYAKSSSQKVRLVADLIRGCDASRAMEILNFSNKKAARLIKKILKSAISNAEHNEGENIENLKIKTIYVNPGPSIKRIMPRAKGRSDRILKRTSHITIVLSGKK.

It belongs to the universal ribosomal protein uL22 family. In terms of assembly, part of the 50S ribosomal subunit.

Functionally, this protein binds specifically to 23S rRNA; its binding is stimulated by other ribosomal proteins, e.g. L4, L17, and L20. It is important during the early stages of 50S assembly. It makes multiple contacts with different domains of the 23S rRNA in the assembled 50S subunit and ribosome. The globular domain of the protein is located near the polypeptide exit tunnel on the outside of the subunit, while an extended beta-hairpin is found that lines the wall of the exit tunnel in the center of the 70S ribosome. This chain is Large ribosomal subunit protein uL22, found in Wigglesworthia glossinidia brevipalpis.